The chain runs to 431 residues: MQWLDLPHVQRAQGNVRLPGSKSISNRILLLSALAEGTTMVSNLLESDDTGRMLDALRLLGVAIVRTDDGKYRVAGCKGKFPVREAELFLGNAGTAFRPLTAVLALMQGHYRLSGVPRMHERPIGDLVDALRQIGAVITCLEHEGFPPLEIHPAVIRPGNISIKGNISSQFLSGLLMALPLTGEPVTIVVSGTLISQPYVALTIAQMARFGVQVKQESWQRFMLPENQTYRSPGKIAVEGDASSASYFLAAGAIAGGPVRIEGAGSDSCQGDIRFVEALEAMGARISMGSDWIESGAPDGGALKAIDFDCNHIPDAAMTLATMALFARGTTTLRNIASWRVKETDRIAAMSAELRKLGARVEAGDDFLRITPPDGPLTADAVIDTYDDHRMAMCFSLVSLSVPVRINDPGCVAKTFPDYFEKFAAITHTPF.

Residues Lys-22, Ser-23, and Arg-27 each coordinate 3-phosphoshikimate. Lys-22 contacts phosphoenolpyruvate. 2 residues coordinate phosphoenolpyruvate: Gly-94 and Arg-122. 3-phosphoshikimate-binding residues include Ser-168, Ser-169, Gln-170, Ser-196, Asp-315, and Lys-342. Position 170 (Gln-170) interacts with phosphoenolpyruvate. Asp-315 acts as the Proton acceptor in catalysis. Arg-346, Arg-390, and Lys-414 together coordinate phosphoenolpyruvate.

The protein belongs to the EPSP synthase family. In terms of assembly, monomer.

Its subcellular location is the cytoplasm. The enzyme catalyses 3-phosphoshikimate + phosphoenolpyruvate = 5-O-(1-carboxyvinyl)-3-phosphoshikimate + phosphate. It functions in the pathway metabolic intermediate biosynthesis; chorismate biosynthesis; chorismate from D-erythrose 4-phosphate and phosphoenolpyruvate: step 6/7. Functionally, catalyzes the transfer of the enolpyruvyl moiety of phosphoenolpyruvate (PEP) to the 5-hydroxyl of shikimate-3-phosphate (S3P) to produce enolpyruvyl shikimate-3-phosphate and inorganic phosphate. In Nitrosomonas europaea (strain ATCC 19718 / CIP 103999 / KCTC 2705 / NBRC 14298), this protein is 3-phosphoshikimate 1-carboxyvinyltransferase.